Reading from the N-terminus, the 869-residue chain is Speckle targeted PIP5K1A-regulated poly(A) polymerase (869 aa).

Residues 16–46 form a Matrin-type zinc finger; sequence FRCCLCDVTTANRPSLDAHLKGRKHRDLVQL. The 73-residue stretch at 56 to 128 folds into the RRM domain; that stretch reads RSVFVSGFPR…HGLRVRPREQ (73 aa). The disordered stretch occupies residues 114–144; the sequence is HSLGGHGLRVRPREQKEFQSPASKSPKGVDS. Serine 205 contributes to the ATP binding site. Aspartate 216 and aspartate 218 together coordinate Mg(2+). The UTP site is built by aspartate 216 and aspartate 218. Disordered regions lie at residues 226–247 and 259–335; these read MEETEPDPKAPKVPETSSLDSA and CTPA…ASKD. 2 stretches are compositionally biased toward polar residues: residues 266–276 and 283–299; these read DSLSPTSVQES and TPSSLAPQTPDSALGSD. The segment covering 314 to 335 has biased composition (basic and acidic residues); the sequence is QEDRKEGKQGKELELAEEASKD. Residue asparagine 395 coordinates ATP. The UTP site is built by asparagine 395, arginine 417, tyrosine 435, and histidine 552. One can recognise a PAP-associated domain in the interval 494–552; it reads LSSLLAQFFSCVSCLDLSGSLLSLREGRPLMVAEGLPSDLWEGLRLGPMNLQDPFDLSH. Residues 601–869 are KA1; binds the bulging loops of U6 snRNA but is dispensable for terminal uridylyltransferase activity; sequence SSPSSLLSAK…IPQALKNLLK (269 aa). Disordered regions lie at residues 640 to 689, 735 to 757, 775 to 796, and 803 to 822; these read QGTK…DHSE, MKPEVAGEGSQGETGKEASHPSS, ARRRLQQQTKEEGRGGPTTGAE, and RVTQELKGPNSEQERPPGEP. Over residues 671 to 689 the composition is skewed to basic and acidic residues; sequence KSFEEGKEEPQGCAGDHSE. Serine 688 and serine 744 each carry phosphoserine.

Belongs to the DNA polymerase type-B-like family. As to quaternary structure, associates with the cleavage and polyadenylation specificity factor (CPSF) complex. Interacts with CPSF1 and CPSF3; the interaction is direct. Interacts with PIP5K1A. Mg(2+) serves as cofactor. Mn(2+) is required as a cofactor. Phosphorylated by CK1 in the proline-rich (Pro-rich) region.

The protein localises to the nucleus. It is found in the nucleolus. It localises to the nucleus speckle. It carries out the reaction RNA(n) + UTP = RNA(n)-3'-uridine ribonucleotide + diphosphate. The catalysed reaction is RNA(n) + ATP = RNA(n)-3'-adenine ribonucleotide + diphosphate. With respect to regulation, adenylyltransferase activity is specifically phosphatidylinositol 4,5-bisphosphate (PtdIns(4,5)P2). Its function is as follows. Poly(A) polymerase that creates the 3'-poly(A) tail of specific pre-mRNAs. Localizes to nuclear speckles together with PIP5K1A and mediates polyadenylation of a select set of mRNAs, such as HMOX1. In addition to polyadenylation, it is also required for the 3'-end cleavage of pre-mRNAs: binds to the 3'UTR of targeted pre-mRNAs and promotes the recruitment and assembly of the CPSF complex on the 3'UTR of pre-mRNAs. In addition to adenylyltransferase activity, also has uridylyltransferase activity. However, the ATP ratio is higher than UTP in cells, suggesting that it functions primarily as a poly(A) polymerase. Acts as a specific terminal uridylyltransferase for U6 snRNA in vitro: responsible for a controlled elongation reaction that results in the restoration of the four 3'-terminal UMP-residues found in newly transcribed U6 snRNA. Not involved in replication-dependent histone mRNA degradation. In Mus musculus (Mouse), this protein is Speckle targeted PIP5K1A-regulated poly(A) polymerase (Tut1).